We begin with the raw amino-acid sequence, 252 residues long: uncharacterized protein (252 aa).

Belongs to the methyltransferase superfamily.

This is an uncharacterized protein from Mycobacterium sp. (strain JLS).